Reading from the N-terminus, the 246-residue chain is UPF0736 protein GWCH70_0753 (246 aa).

Belongs to the UPF0736 family.

The polypeptide is UPF0736 protein GWCH70_0753 (Geobacillus sp. (strain WCH70)).